The sequence spans 54 residues: U-reduvitoxin-Pr7a (54 aa).

The signal sequence occupies residues 1–23 (MDFLRILLFVLACIMALFTSAIA). 3 disulfides stabilise this stretch: Cys-26/Cys-41, Cys-33/Cys-46, and Cys-40/Cys-53.

It belongs to the venom Ptu1-like knottin family. Expressed by the venom gland.

Its subcellular location is the secreted. In terms of biological role, binds reversibly and blocks P/Q-type voltage-gated calcium channels (Cav). This is U-reduvitoxin-Pr7a from Platymeris rhadamanthus (Red spot assassin bug).